The primary structure comprises 207 residues: 5-amino-6-(5-phosphoribosylamino)uracil reductase (207 aa).

Serine 6 provides a ligand contact to substrate. Tryptophan 8 serves as a coordination point for NADP(+). Residue arginine 22 participates in substrate binding. Residue aspartate 38 coordinates NADP(+). Leucine 42 and arginine 45 together coordinate substrate. Residue serine 72 participates in NADP(+) binding. Glutamate 137 contributes to the substrate binding site.

It belongs to the HTP reductase family.

The catalysed reaction is 5-amino-6-(5-phospho-D-ribitylamino)uracil + NADP(+) = 5-amino-6-(5-phospho-D-ribosylamino)uracil + NADPH + H(+). The protein operates within cofactor biosynthesis; riboflavin biosynthesis; 5-amino-6-(D-ribitylamino)uracil from GTP: step 3/4. This is 5-amino-6-(5-phosphoribosylamino)uracil reductase (ribD2) from Buchnera aphidicola subsp. Acyrthosiphon pisum (strain APS) (Acyrthosiphon pisum symbiotic bacterium).